Here is a 67-residue protein sequence, read N- to C-terminus: MRIHYLLFAVLFLFLMPVPGEGGIINTIQRYFCRVRGGRCAALTCLPRETQIGRCSVKGRKCCRTRK.

An N-terminal signal peptide occupies residues 1–22 (MRIHYLLFAVLFLFLMPVPGEG). Disulfide bonds link Cys-33/Cys-62, Cys-40/Cys-55, and Cys-45/Cys-63.

As to quaternary structure, monomer. Homodimer. As to expression, highly expressed in tongue, nasopharyngeal mucosa and skin, and to a lower extent in the Eustachian tube, lung and trachea.

The protein localises to the secreted. Its subcellular location is the membrane. In terms of biological role, has antibacterial activity against Gram-positive bacterium S.pneumoniae Serotype 14. Is also active against Gram-negative bacteria M.catarrhalis 1857, and non-typeable H.influenzae strains 86-028NP and 1128. Has antifungal activity against C.albicans. May have a role in maintaining sterility in the middle ear. May act as a ligand for C-C chemokine receptor CCR6. Positively regulates the sperm motility and bactericidal activity in a CCR6-dependent manner. Binds to CCR6 and triggers Ca2+ mobilization in the sperm which is important for its motility. In Chinchilla lanigera (Long-tailed chinchilla), this protein is Beta-defensin 1 (DEFB1).